Here is a 150-residue protein sequence, read N- to C-terminus: Large ribosomal subunit protein bL9 (150 aa).

Belongs to the bacterial ribosomal protein bL9 family.

Binds to the 23S rRNA. The sequence is that of Large ribosomal subunit protein bL9 from Streptococcus sanguinis (strain SK36).